The following is a 518-amino-acid chain: Glutamate--cysteine ligase (518 aa).

This sequence belongs to the glutamate--cysteine ligase type 1 family. Type 1 subfamily.

It catalyses the reaction L-cysteine + L-glutamate + ATP = gamma-L-glutamyl-L-cysteine + ADP + phosphate + H(+). It participates in sulfur metabolism; glutathione biosynthesis; glutathione from L-cysteine and L-glutamate: step 1/2. This is Glutamate--cysteine ligase from Shigella boydii serotype 18 (strain CDC 3083-94 / BS512).